The chain runs to 787 residues: Protein translocase subunit SecA (787 aa).

Residues Gln-85, Gly-103–Thr-107, and Asp-492 each bind ATP.

This sequence belongs to the SecA family. Monomer and homodimer. Part of the essential Sec protein translocation apparatus which comprises SecA, SecYEG and auxiliary proteins SecDF. Other proteins may also be involved.

It localises to the cell membrane. Its subcellular location is the cytoplasm. The enzyme catalyses ATP + H2O + cellular proteinSide 1 = ADP + phosphate + cellular proteinSide 2.. Part of the Sec protein translocase complex. Interacts with the SecYEG preprotein conducting channel. Has a central role in coupling the hydrolysis of ATP to the transfer of proteins into and across the cell membrane, serving as an ATP-driven molecular motor driving the stepwise translocation of polypeptide chains across the membrane. This chain is Protein translocase subunit SecA, found in Latilactobacillus sakei subsp. sakei (strain 23K) (Lactobacillus sakei subsp. sakei).